The primary structure comprises 445 residues: Plasmid recombination enzyme (445 aa).

Residues tyrosine 45 and tyrosine 113 each coordinate DNA.

Belongs to the plasmid mobilization pre family.

The protein is Plasmid recombination enzyme of Bacillus thuringiensis.